The chain runs to 581 residues: Alpha-amylase 2 (581 aa).

A signal peptide spans 1–24 (MNYRRNICLRIGWMLLFAFIPAYA). Cys-56 and Cys-64 are joined by a disulfide. Trp-109 provides a ligand contact to substrate. Asn-147 lines the Ca(2+) pocket. The cysteines at positions 176 and 191 are disulfide-linked. A Ca(2+)-binding site is contributed by Asp-202. A substrate-binding site is contributed by Arg-231. Ca(2+)-binding residues include Asp-233, His-237, and Glu-257. The active-site Nucleophile is Asp-233. 236–237 (KH) provides a ligand contact to substrate. Residue Glu-257 is the Proton donor of the active site. Gly-261 is a substrate binding site. A disulfide bond links Cys-267 and Cys-311. A glycan (N-linked (GlcNAc...) asparagine) is linked at Asn-291. Asp-325 is a binding site for substrate. Asn-332 is a glycosylation site (N-linked (GlcNAc...) asparagine). Residue Arg-372 participates in substrate binding. The GPI-anchor amidated serine moiety is linked to residue Ser-551. Residues 552 to 581 (EAKTIRSFTKLKLFILLIAVPFALPMIILI) constitute a propeptide, removed in mature form.

The protein belongs to the glycosyl hydrolase 13 family. Ca(2+) serves as cofactor.

The protein resides in the cell membrane. The enzyme catalyses Endohydrolysis of (1-&gt;4)-alpha-D-glucosidic linkages in polysaccharides containing three or more (1-&gt;4)-alpha-linked D-glucose units.. The chain is Alpha-amylase 2 (aah2) from Schizosaccharomyces pombe (strain 972 / ATCC 24843) (Fission yeast).